Consider the following 400-residue polypeptide: MAKQKFDRSKPHCNVGTIGHVDHGKTTLTAAITKTLSTKGWADFRAYDQIDNAPEEKARGLTIAISHIEYQTETRHYAHIDCPGHADYIKNMITGAAQMDGAILVVSAPDGPMPQTREHVLLIHQVEVPAVVVALNKCDMMDDEELLELVELEVRELLTKNSFPGDEIPVVRVSAIKALECGCGKRECEWCGRIWKLMDAVDTYIPIPPRPVDKPFLMKVEDVFSIKGRGTVATGRVERGVIKGGDEVDLVGLHHEPRKIVVTSLEMFHKILDTAEPGDAVGLLLRGVEREDIERGMVLAKPGSIKPHVNAEAEVYVLSKDEGGRHTPFFNGYKPQFFFGTTDVTGEIHLPEGVEMVVPGDHVKMKISTIYPVAMEKGMRFAIREGGKTVGAGAISQVLA.

In terms of domain architecture, tr-type G spans 10-210 (KPHCNVGTIG…VDTYIPIPPR (201 aa)). Residues 19–26 (GHVDHGKT) form a G1 region. 19 to 26 (GHVDHGKT) provides a ligand contact to GTP. Residue Thr26 coordinates Mg(2+). The G2 stretch occupies residues 60 to 64 (GLTIA). A G3 region spans residues 81 to 84 (DCPG). Residues 81-85 (DCPGH) and 136-139 (NKCD) each bind GTP. Residues 136 to 139 (NKCD) are G4. Positions 174-176 (SAI) are G5.

Belongs to the TRAFAC class translation factor GTPase superfamily. Classic translation factor GTPase family. EF-Tu/EF-1A subfamily. In terms of assembly, monomer.

Its subcellular location is the cytoplasm. The catalysed reaction is GTP + H2O = GDP + phosphate + H(+). GTP hydrolase that promotes the GTP-dependent binding of aminoacyl-tRNA to the A-site of ribosomes during protein biosynthesis. In Dehalococcoides mccartyi (strain CBDB1), this protein is Elongation factor Tu.